Consider the following 126-residue polypeptide: Glycine cleavage system H protein (126 aa).

The Lipoyl-binding domain maps to 24–106 (TVTVGITDHA…YGEGWMYRIK (83 aa)). Lys-65 is subject to N6-lipoyllysine.

Belongs to the GcvH family. The glycine cleavage system is composed of four proteins: P, T, L and H. The cofactor is (R)-lipoate.

Functionally, the glycine cleavage system catalyzes the degradation of glycine. The H protein shuttles the methylamine group of glycine from the P protein to the T protein. This chain is Glycine cleavage system H protein, found in Psychrobacter sp. (strain PRwf-1).